We begin with the raw amino-acid sequence, 618 residues long: Syncytin-B (618 aa).

Residues 1 to 17 (MTGFWVLCFVLFPSSLS) form the signal peptide. The Extracellular segment spans residues 18 to 545 (YPESWMPLVN…SWGQWPDLGR (528 aa)). A glycan (N-linked (GlcNAc...) asparagine) is linked at N27. Positions 44 to 47 (CWVC) match the CXXC motif. Intrachain disulfides connect C44–C47, C44–C507, and C499–C506. N184, N274, and N357 each carry an N-linked (GlcNAc...) asparagine glycan. The interval 422–442 (LFPFLAGLGISSALGTGIAGL) is fusion peptide. Residues 482–498 (LQNRRALDLITAEKGGT) form an immunosuppression region. A CX6CC motif is present at residues 499 to 507 (CLFLQEECC). The chain crosses the membrane as a helical span at residues 546–566 (WLPWLTPFLGPLLFLFFLLTF). The Cytoplasmic portion of the chain corresponds to 567–618 (GSCLLNCLTRFVSQRLGSFVQDTAKRHVDSILQNFQYKKLPQDSPDEDTIPT).

The protein belongs to the gamma type-C retroviral envelope protein family. As to quaternary structure, the mature protein consists of a trimer of SU-TM heterodimers. The SU-TM heterodimers are attached by a labile interchain disulfide bond. Post-translationally, synthesized as an inactive precursor that is heavily N-glycosylated and processed likely by furin in the Golgi to yield the mature SU and TM proteins. The cleavage site between SU and TM requires the minimal sequence [KR]-X-[KR]-R. The CXXC motif is highly conserved across a broad range of retroviral envelope proteins. It is thought to participate in the formation of a labile disulfide bond possibly with the CX6CC motif present in the transmembrane protein. Isomerization of the intersubunit disulfide bond to an SU intrachain disulfide bond is thought to occur upon receptor recognition in order to allow membrane fusion. In terms of tissue distribution, highly expressed in placenta where it localizes to syncytiotrophoblasts of the labyrinthine zona. Specifically localizes to syncytiotrophoblast layer II (SynT-II). Also detected at very low levels in ovary.

It localises to the cell membrane. Its function is as follows. This endogenous retroviral envelope protein has retained its original fusogenic properties. Together with Syna, participates in trophoblast fusion and the formation of a syncytium during placenta morphogenesis. Synb is specifically involved in formation of syncytiotrophoblast layer II (SynT-II). Promotes myoblast fusion, and may play a role in regeneration of damaged muscle tissue in males. May have immunosuppressive activity. The chain is Syncytin-B from Mus musculus (Mouse).